A 100-amino-acid polypeptide reads, in one-letter code: UPF0213 protein YhbQ (100 aa).

Positions 2–77 (TPWYLYLIRT…KQLTKRQKER (76 aa)) constitute a GIY-YIG domain.

The protein belongs to the UPF0213 family.

The protein is UPF0213 protein YhbQ of Salmonella arizonae (strain ATCC BAA-731 / CDC346-86 / RSK2980).